The following is a 749-amino-acid chain: MQTSETGSDTGSTVTLQTSVASQAAVPTQVVQQVPVQQQVQQVQTVQQVQHVYPAQVQYVEGSDTVYTNGAIRTTTYPYTETQMYSQNTGGNYFDTQGSSAQVTTVVSSHSMVGTGGIQMGVTGGQLISSSGGTYLIGNSMENSGHSVTHTTRASPATIEMAIETLQKSDGLSTHRSSLLNSHLQWLLDNYETAEGVSLPRSTLYNHYLRHCQEHKLDPVNAASFGKLIRSIFMGLRTRRLGTRGNSKYHYYGIRVKPDSPLNRLQEDMQYMAMRQQPMQQKQRYKPMQKVDGVADGFTGSGQQTGTSVEQTVIAQSQHHQQFLDASRALPEFGEVEISSLPDGTTFEDIKSLQSLYREHCEAILDVVVNLQFSLIEKLWQTFWRYSPSTPTDGTTITESSNLSEIESRLPKAKLITLCKHESILKWMCNCDHGMYQALVEILIPDVLRPIPSALTQAIRNFAKSLEGWLSNAMNNIPQRMIQTKVAAVSAFAQTLRRYTSLNHLAQAARAVLQNTSQINQMLSDLNRVDFANVQEQASWVCQCDDNMVQRLETDFKMTLQQQSTLEQWAAWLDNVMMQALKPYEGRPSFPKAARQFLLKWSFYSSMVIRDLTLRSAASFGSFHLIRLLYDEYMFYLVEHRVAQATGETPIAVMGEFGDLNAVSPGNLDKDEGSEVESEMDEELDDSSEPQAKREKTELSQAFPVGCMQPVLETGVQPSLLNPIHSEHIVTSTQTIRQCSATGNTYTAV.

Positions 183–258 form a DNA-binding region, RFX-type winged-helix; the sequence is HLQWLLDNYE…YHYYGIRVKP (76 aa). A disordered region spans residues 663–699; sequence VSPGNLDKDEGSEVESEMDEELDDSSEPQAKREKTEL. Residues 674–688 show a composition bias toward acidic residues; sequence SEVESEMDEELDDSS.

Belongs to the RFX family. Heterodimer; heterodimerizes with RFX1 and RFX2, and RFX6.

The protein resides in the nucleus. Its function is as follows. Transcription factor required for ciliogenesis and islet cell differentiation during endocrine pancreas development. Essential for the differentiation of nodal monocilia and left-right asymmetry specification during embryogenesis. Required for the biogenesis of motile cilia by governing growth and beating efficiency of motile cells. Also required for ciliated ependymal cell differentiation. Regulates the expression of genes involved in ciliary assembly (DYNC2LI1, FOXJ1 and BBS4) and genes involved in ciliary motility (DNAH11, DNAH9 and DNAH5). Together with RFX6, participates in the differentiation of 4 of the 5 islet cell types during endocrine pancreas development, with the exception of pancreatic PP (polypeptide-producing) cells. Regulates transcription by forming a heterodimer with another RFX protein and binding to the X-box in the promoter of target genes. Represses transcription of MAP1A in non-neuronal cells but not in neuronal cells. This is Transcription factor RFX3 (RFX3) from Homo sapiens (Human).